Here is a 337-residue protein sequence, read N- to C-terminus: DNA-directed RNA polymerase subunit alpha (337 aa).

The alpha N-terminal domain (alpha-NTD) stretch occupies residues 1–233 (MVREEIAEST…DLFVPFLHAE (233 aa)). The tract at residues 266–337 (GIPLKYIFID…FAVDLPKVLI (72 aa)) is alpha C-terminal domain (alpha-CTD).

This sequence belongs to the RNA polymerase alpha chain family. In terms of assembly, in plastids the minimal PEP RNA polymerase catalytic core is composed of four subunits: alpha, beta, beta', and beta''. When a (nuclear-encoded) sigma factor is associated with the core the holoenzyme is formed, which can initiate transcription.

The protein localises to the plastid. It is found in the chloroplast. The enzyme catalyses RNA(n) + a ribonucleoside 5'-triphosphate = RNA(n+1) + diphosphate. In terms of biological role, DNA-dependent RNA polymerase catalyzes the transcription of DNA into RNA using the four ribonucleoside triphosphates as substrates. The polypeptide is DNA-directed RNA polymerase subunit alpha (Dioscorea elephantipes (Elephant's foot yam)).